Reading from the N-terminus, the 353-residue chain is Rhodopsin (353 aa).

Over 1–36 the chain is Extracellular; it reads MNGTEGPYFYIPMVNTTGIVRSPYEYPQYYLVNPAA. N-linked (GlcNAc...) asparagine glycosylation is found at asparagine 2 and asparagine 15. Residues 37-61 traverse the membrane as a helical segment; that stretch reads YAALGAYMFLLILLGFPINFLTLYV. Residues 62 to 73 are Cytoplasmic-facing; the sequence is TIEHKKLRTPLN. The helical transmembrane segment at 74-96 threads the bilayer; that stretch reads YILLNLAVANLFMVFGGFTTTMY. Topologically, residues 97 to 110 are extracellular; that stretch reads TSMHGYFVLGRLGC. Cysteines 110 and 187 form a disulfide. A helical transmembrane segment spans residues 111-133; that stretch reads NLEGFFATLGGEIALWSLVVLAV. The 'Ionic lock' involved in activated form stabilization signature appears at 134 to 136; that stretch reads ERW. Over 134–152 the chain is Cytoplasmic; it reads ERWMVVCKPISNFRFGENH. Residues 153–173 traverse the membrane as a helical segment; that stretch reads AIMGLAFTWVMASACAVPPLV. Topologically, residues 174 to 202 are extracellular; the sequence is GWSRYIPEGMQCSCGIDYYTRAEGFNNES. Asparagine 200 is a glycosylation site (N-linked (GlcNAc...) asparagine). The chain crosses the membrane as a helical span at residues 203-224; that stretch reads FVIYMFVCHFLIPLVVVFFCYG. Over 225-252 the chain is Cytoplasmic; sequence RLLCAVKEAAAAQQESETTQRAEREVSR. The helical transmembrane segment at 253-274 threads the bilayer; the sequence is MVVIMVVAFLICWCPYAGVAWY. The Extracellular segment spans residues 275–286; the sequence is IFTHQGSEFGPL. A helical transmembrane segment spans residues 287–308; that stretch reads FMTFPAFFAKSSSIYNPMIYIC. Lysine 296 carries the post-translational modification N6-(retinylidene)lysine. Topologically, residues 309 to 353 are cytoplasmic; sequence MNKQFRHCMITTLCCGKNPFEEEEGASTTSKTEASSVSSSSVSPA. 2 S-palmitoyl cysteine lipidation sites follow: cysteine 322 and cysteine 323. Positions 330–353 are disordered; it reads EEEGASTTSKTEASSVSSSSVSPA. Residues 334–353 are compositionally biased toward low complexity; it reads ASTTSKTEASSVSSSSVSPA.

The protein belongs to the G-protein coupled receptor 1 family. Opsin subfamily. Post-translationally, phosphorylated on some or all of the serine and threonine residues present in the C-terminal region. Contains one covalently linked retinal chromophore.

The protein localises to the membrane. It localises to the cell projection. It is found in the cilium. Its subcellular location is the photoreceptor outer segment. Its function is as follows. Photoreceptor required for image-forming vision at low light intensity. While most salt water fish species use retinal as chromophore, most freshwater fish use 3-dehydroretinal, or a mixture of retinal and 3-dehydroretinal. Light-induced isomerization of 11-cis to all-trans retinal triggers a conformational change that activates signaling via G-proteins. Subsequent receptor phosphorylation mediates displacement of the bound G-protein alpha subunit by arrestin and terminates signaling. This chain is Rhodopsin (rho), found in Mugil cephalus (Flathead mullet).